The following is a 231-amino-acid chain: Ribose-5-phosphate isomerase A (231 aa).

Substrate-binding positions include 32–35 (TGST), 85–88 (DGAD), and 98–101 (KGGG). Catalysis depends on glutamate 107, which acts as the Proton acceptor. Lysine 125 is a substrate binding site.

It belongs to the ribose 5-phosphate isomerase family. Homodimer.

It catalyses the reaction aldehydo-D-ribose 5-phosphate = D-ribulose 5-phosphate. Its pathway is carbohydrate degradation; pentose phosphate pathway; D-ribose 5-phosphate from D-ribulose 5-phosphate (non-oxidative stage): step 1/1. Functionally, catalyzes the reversible conversion of ribose-5-phosphate to ribulose 5-phosphate. In Burkholderia cenocepacia (strain ATCC BAA-245 / DSM 16553 / LMG 16656 / NCTC 13227 / J2315 / CF5610) (Burkholderia cepacia (strain J2315)), this protein is Ribose-5-phosphate isomerase A.